Reading from the N-terminus, the 647-residue chain is MGKIRKLDDQLSNLIAAGEVVERPASVVKELVENSIDANSTSIEIHLEEAGLSKIRIIDNGDGIAEEDCIVAFERHATSKIKDENDLFRIRTLGFRGEALPSIASVSELELITSTGDAPGTHLIIKGGDIIKQEKTASRKGTDITVQNLFFNTPARLKYMKTIHTELGNITDIVYRIAMSHPEVSLKLFHNEKKLLHTSGNGDVRQVLASIYSIQVAKKLVPIEAESLDFTIKGYVTLPEVTRASRNYMSTIVNGRYVRNFVLMKAIQQGYHTLLPVGRYPIGFLSIEMDPMLVDVNVHPAKLEVRFSKEQELLKLIEETLQAAFKKIQLIPDAGVTTKKKEKDESVQEQFQFEHAKPKEPSMPEIVLPTGMDEKQEEPLAVKQPTQLWQPPKQEWQPPQSLVREEQSWQPSTKPIIEEPIQEEKSWDSNEEGFELEELEEEVREIKEIEMNGNDLPPLYPIGQMHGTYIFAQNDKGLYMIDQHAAQERINYEYFRDKVGRVAQEVQELLVPYRIDLSLTEFLRVEEQLEELKKVGLFLEQFGHQSFIVRSHPTWFPKGQETEIIDEMMEQVVKLKKVDIKKLREEAAIMMSCKASIKANQYLTNDQIFALLEELRTTTNPYTCPHGRPILVHHSTYELEKMFKRVM.

This sequence belongs to the DNA mismatch repair MutL/HexB family.

In terms of biological role, this protein is involved in the repair of mismatches in DNA. It is required for dam-dependent methyl-directed DNA mismatch repair. May act as a 'molecular matchmaker', a protein that promotes the formation of a stable complex between two or more DNA-binding proteins in an ATP-dependent manner without itself being part of a final effector complex. This Bacillus thuringiensis (strain Al Hakam) protein is DNA mismatch repair protein MutL.